Consider the following 217-residue polypeptide: Phosphatidylserine decarboxylase proenzyme (217 aa).

The Schiff-base intermediate with substrate; via pyruvic acid role is filled by Ser182. Residue Ser182 is modified to Pyruvic acid (Ser); by autocatalysis.

It belongs to the phosphatidylserine decarboxylase family. PSD-A subfamily. As to quaternary structure, heterodimer of a large membrane-associated beta subunit and a small pyruvoyl-containing alpha subunit. Pyruvate is required as a cofactor. In terms of processing, is synthesized initially as an inactive proenzyme. Formation of the active enzyme involves a self-maturation process in which the active site pyruvoyl group is generated from an internal serine residue via an autocatalytic post-translational modification. Two non-identical subunits are generated from the proenzyme in this reaction, and the pyruvate is formed at the N-terminus of the alpha chain, which is derived from the carboxyl end of the proenzyme. The post-translation cleavage follows an unusual pathway, termed non-hydrolytic serinolysis, in which the side chain hydroxyl group of the serine supplies its oxygen atom to form the C-terminus of the beta chain, while the remainder of the serine residue undergoes an oxidative deamination to produce ammonia and the pyruvoyl prosthetic group on the alpha chain.

It is found in the cell membrane. The catalysed reaction is a 1,2-diacyl-sn-glycero-3-phospho-L-serine + H(+) = a 1,2-diacyl-sn-glycero-3-phosphoethanolamine + CO2. The protein operates within phospholipid metabolism; phosphatidylethanolamine biosynthesis; phosphatidylethanolamine from CDP-diacylglycerol: step 2/2. Catalyzes the formation of phosphatidylethanolamine (PtdEtn) from phosphatidylserine (PtdSer). The chain is Phosphatidylserine decarboxylase proenzyme from Nitratidesulfovibrio vulgaris (strain ATCC 29579 / DSM 644 / CCUG 34227 / NCIMB 8303 / VKM B-1760 / Hildenborough) (Desulfovibrio vulgaris).